A 96-amino-acid polypeptide reads, in one-letter code: Co-chaperonin GroES (96 aa).

The protein belongs to the GroES chaperonin family. As to quaternary structure, heptamer of 7 subunits arranged in a ring. Interacts with the chaperonin GroEL.

It localises to the cytoplasm. Together with the chaperonin GroEL, plays an essential role in assisting protein folding. The GroEL-GroES system forms a nano-cage that allows encapsulation of the non-native substrate proteins and provides a physical environment optimized to promote and accelerate protein folding. GroES binds to the apical surface of the GroEL ring, thereby capping the opening of the GroEL channel. The polypeptide is Co-chaperonin GroES (Pelagibacter ubique (strain HTCC1062)).